The primary structure comprises 299 residues: Regucalcin (299 aa).

E18 is a binding site for a divalent metal cation. Substrate is bound by residues R101, N103, and E121. Residues N154 and D204 each contribute to the a divalent metal cation site. D204 acts as the Proton donor/acceptor in catalysis. 2 positions are modified to N6-succinyllysine: K244 and K253.

The protein belongs to the SMP-30/CGR1 family. As to quaternary structure, monomer. The cofactor is Zn(2+). It depends on Mn(2+) as a cofactor. Ca(2+) serves as cofactor. Mg(2+) is required as a cofactor.

Its subcellular location is the cytoplasm. The catalysed reaction is D-glucono-1,5-lactone + H2O = D-gluconate + H(+). Its pathway is cofactor biosynthesis; L-ascorbate biosynthesis via UDP-alpha-D-glucuronate pathway; L-ascorbate from UDP-alpha-D-glucuronate: step 3/4. In terms of biological role, gluconolactonase with low activity towards other sugar lactones, including gulonolactone and galactonolactone. Catalyzes a key step in ascorbic acid (vitamin C) biosynthesis. Can also hydrolyze diisopropyl phosphorofluoridate and phenylacetate (in vitro). Calcium-binding protein. Modulates Ca(2+) signaling, and Ca(2+)-dependent cellular processes and enzyme activities. In Bos taurus (Bovine), this protein is Regucalcin (RGN).